A 430-amino-acid chain; its full sequence is UDP-N-acetylglucosamine 1-carboxyvinyltransferase (430 aa).

Residue 22–23 (KN) coordinates phosphoenolpyruvate. A UDP-N-acetyl-alpha-D-glucosamine-binding site is contributed by Arg102. Cys126 serves as the catalytic Proton donor. Cys126 carries the post-translational modification 2-(S-cysteinyl)pyruvic acid O-phosphothioketal. Residues 131–135 (RPVDL), 172–175 (KVSV), Asp317, and Ile339 contribute to the UDP-N-acetyl-alpha-D-glucosamine site.

The protein belongs to the EPSP synthase family. MurA subfamily.

The protein resides in the cytoplasm. The catalysed reaction is phosphoenolpyruvate + UDP-N-acetyl-alpha-D-glucosamine = UDP-N-acetyl-3-O-(1-carboxyvinyl)-alpha-D-glucosamine + phosphate. The protein operates within cell wall biogenesis; peptidoglycan biosynthesis. Functionally, cell wall formation. Adds enolpyruvyl to UDP-N-acetylglucosamine. The polypeptide is UDP-N-acetylglucosamine 1-carboxyvinyltransferase (Allorhizobium ampelinum (strain ATCC BAA-846 / DSM 112012 / S4) (Agrobacterium vitis (strain S4))).